The primary structure comprises 286 residues: ATP synthase gamma chain (286 aa).

Belongs to the ATPase gamma chain family. As to quaternary structure, F-type ATPases have 2 components, CF(1) - the catalytic core - and CF(0) - the membrane proton channel. CF(1) has five subunits: alpha(3), beta(3), gamma(1), delta(1), epsilon(1). CF(0) has three main subunits: a, b and c.

The protein localises to the cell inner membrane. In terms of biological role, produces ATP from ADP in the presence of a proton gradient across the membrane. The gamma chain is believed to be important in regulating ATPase activity and the flow of protons through the CF(0) complex. The chain is ATP synthase gamma chain from Marinomonas sp. (strain MWYL1).